Here is a 375-residue protein sequence, read N- to C-terminus: Growth/differentiation factor 8 (375 aa).

A signal peptide spans methionine 1–alanine 18. Positions glycine 19–arginine 266 are excised as a propeptide. A glycan (N-linked (GlcNAc...) asparagine) is linked at asparagine 71. 4 disulfides stabilise this stretch: cysteine 272–cysteine 282, cysteine 281–cysteine 340, cysteine 309–cysteine 372, and cysteine 313–cysteine 374.

Belongs to the TGF-beta family. As to quaternary structure, homodimer; disulfide-linked. Interacts with WFIKKN2, leading to inhibit its activity. Interacts with FSTL3. Post-translationally, synthesized as large precursor molecule that undergoes proteolytic cleavage to generate an N-terminal propeptide and a disulfide linked C-terminal dimer, which is the biologically active molecule. The circulating form consists of a latent complex of the C-terminal dimer and other proteins, including its propeptide, which maintain the C-terminal dimer in a latent, inactive state. Ligand activation requires additional cleavage of the prodomain by a tolloid-like metalloproteinase.

It localises to the secreted. In terms of biological role, acts specifically as a negative regulator of skeletal muscle growth. The polypeptide is Growth/differentiation factor 8 (MSTN) (Equus caballus (Horse)).